The chain runs to 709 residues: Mucin-20 (709 aa).

Residues 1–25 (MGCLWGLALPLFFFCWEVGVSGSSA) form the signal peptide. The segment covering 57 to 69 (TQTLSAETSSRAS) has biased composition (polar residues). Disordered stretches follow at residues 57–92 (TQTLSAETSSRASTPAGPIPEAETRGAKRISPARET) and 170–403 (KGLS…WSPG). Residues 78–92 (AETRGAKRISPARET) are compositionally biased toward basic and acidic residues. 12 stretches are compositionally biased toward low complexity: residues 173 to 182 (SSESSASSDS), 190 to 199 (SRASESSASS), 209 to 218 (SRASESSASS), 228 to 237 (SRASESSASS), 247 to 256 (SRASESSASS), 266 to 275 (SRASESSASS), 285 to 294 (SRASESSASS), 304 to 313 (SRASESSASS), 323 to 332 (SRASESSASS), 342 to 351 (SRASESSASS), 361 to 370 (SRASESSASS), and 380 to 389 (SRASESSASS). Tandem repeats lie at residues 173–192 (SSESSASSDSPHPVITPSRA), 193–211 (SESSASSDGPHPVITPSRA), 212–230 (SESSASSDGPHPVITPSRA), 231–249 (SESSASSDGPHPVITPSRA), 250–268 (SESSASSDGPHPVITPSRA), 269–287 (SESSASSDGPHPVITPSRA), 288–306 (SESSASSDGPHPVITPSRA), 307–325 (SESSASSDGPHPVITPSRA), 326–344 (SESSASSDGPHPVITPSRA), 345–363 (SESSASSDGLHPVITPSRA), and 364–382 (SESSASSDGPHPVITPSRA). A 12 X 20 AA approximate tandem repeats of S-S-E-S-S-A-S-S-D-S-P-H-P-V-I-T-P-S-R-A region spans residues 173–400 (SSESSASSDS…GPHPVITPSW (228 aa)). Residues 383-400 (SESSASSDGPHPVITPSW) form a 12; approximate repeat. N423 carries an N-linked (GlcNAc...) asparagine glycan. Disordered stretches follow at residues 434 to 515 (SSIP…APGA) and 583 to 657 (NFTP…VSAG). The segment at 450–656 (VKASSTSDPP…RTRPTTDVSA (207 aa)) is involved in oligomerization. Positions 474 to 489 (VTASAETLSTAGTTES) are enriched in polar residues. The segment covering 613 to 652 (TTTNSSRGTNSTLAKITTSAKTTMKPPTATPTTARTRPTT) has biased composition (low complexity). N616 and N622 each carry an N-linked (GlcNAc...) asparagine glycan. Residues 657 to 709 (GENGGFLLLRLSVASPEDLTDPRVAERLMQQLHRELHAHAPHFQVSLLRVRRG) form an interaction with MET region.

Interacts with MET; oligomerization increases affinity for MET. As to expression, highly expressed in kidney, moderately in placenta, lung, prostate, liver, and digestive system. In the kidney, localized in the proximal tubules but not in the glomerulus or distal tubules. Detected in most of the male urogenital tract epithelia, with the exception of epididymis.

Its subcellular location is the secreted. It localises to the apical cell membrane. The protein localises to the basolateral cell membrane. The protein resides in the cell projection. It is found in the microvillus membrane. Its function is as follows. May regulate MET signaling cascade. Seems to decrease hepatocyte growth factor (HGF)-induced transient MAPK activation. Blocks GRB2 recruitment to MET thus suppressing the GRB2-RAS pathway. Inhibits HGF-induced proliferation of MMP1 and MMP9 expression. The sequence is that of Mucin-20 (MUC20) from Homo sapiens (Human).